We begin with the raw amino-acid sequence, 478 residues long: Glutamate-1-semialdehyde 2,1-aminomutase, chloroplastic (478 aa).

Lys318 carries the post-translational modification N6-(pyridoxal phosphate)lysine.

Belongs to the class-III pyridoxal-phosphate-dependent aminotransferase family. HemL subfamily. Homodimer. Pyridoxal 5'-phosphate is required as a cofactor.

The protein localises to the plastid. The protein resides in the chloroplast. The enzyme catalyses (S)-4-amino-5-oxopentanoate = 5-aminolevulinate. Its pathway is porphyrin-containing compound metabolism; protoporphyrin-IX biosynthesis; 5-aminolevulinate from L-glutamyl-tRNA(Glu): step 2/2. The protein operates within porphyrin-containing compound metabolism; chlorophyll biosynthesis. This is Glutamate-1-semialdehyde 2,1-aminomutase, chloroplastic (GSA) from Nicotiana tabacum (Common tobacco).